Reading from the N-terminus, the 1465-residue chain is Claspin (1465 aa).

The segment covering 1–12 (MSESLAETAAAA) has biased composition (low complexity). Disordered regions lie at residues 1-490 (MSES…KAKV), 544-566 (ATAL…GLRM), and 585-636 (ATEF…TEDM). Ser-45, Ser-49, Ser-52, Ser-64, Ser-75, Ser-109, and Ser-114 each carry phosphoserine. Over residues 121–133 (QAEKKTQKEEGKQ) the composition is skewed to basic and acidic residues. Residues 154-163 (KSNKTKKAVK) are compositionally biased toward basic residues. A compositionally biased stretch (basic and acidic residues) spans 205–216 (EYDHHQQHEKPA). Residues 217 to 228 (KTQKSKKLAKKQ) are compositionally biased toward basic residues. 4 stretches are compositionally biased toward basic and acidic residues: residues 229–246 (KQQE…EKKK), 254–263 (KKSDKSKIDS), 273–286 (EDLK…EPQK), and 296–335 (TNKD…EQIV). Residues 260 to 281 (KIDSLMDNEEDAGEDLKMYQED) adopt a coiled-coil conformation. Positions 336 to 346 (KPKKMAKKNKQ) are enriched in basic residues. Residues Ser-350 and Ser-354 each carry the phosphoserine modification. Residues 358 to 373 (QNEKVDQDHDLKKMSS) show a composition bias toward basic and acidic residues. The span at 375-388 (NELEMGSDKEDQEM) shows a compositional bias: acidic residues. 9 positions are modified to phosphoserine: Ser-381, Ser-404, Ser-406, Ser-432, Ser-434, Ser-444, Ser-456, Ser-458, and Ser-468. Positions 400-417 (QRMDSESEDEIPKTESEK) are enriched in basic and acidic residues. Acidic residues predominate over residues 432–441 (SESEPEETAE). Residues 456–470 (SESEPELDNPEESAG) show a composition bias toward acidic residues. Positions 564–587 (LRMTREELEAYAKLMEDRAKEATE) form a coiled coil. A compositionally biased stretch (acidic residues) spans 594–606 (ESDEEDDSENEEP). A Phosphothreonine modification is found at Thr-693. Residues 839 to 874 (LITKKRMEDLRKKQAEEQEKMAEDEEEGMDVDEEYE) adopt a coiled-coil conformation. A compositionally biased stretch (basic and acidic residues) spans 845 to 859 (MEDLRKKQAEEQEKM). The segment at 845-977 (MEDLRKKQAE…LDLLQTPKPS (133 aa)) is disordered. Composition is skewed to acidic residues over residues 860-875 (AEDE…EYEP), 913-942 (ADED…EANP), and 960-969 (DDNSDEDDLD). Ser-963 bears the Phosphoserine mark. Thr-973 is subject to Phosphothreonine. At Ser-990 the chain carries Phosphoserine. The tract at residues 1058–1154 (CSGTFATQLP…AEPVEEIPET (97 aa)) is disordered. A compositionally biased stretch (low complexity) spans 1067–1076 (PSQAPTQQPE). Ser-1093 and Ser-1094 each carry phosphoserine. The span at 1094 to 1103 (SDEEAQEDAL) shows a compositional bias: acidic residues. Positions 1109-1123 (RNKKLTKKRPKKKAK) are enriched in basic residues. The span at 1127–1154 (SDDEDSDDEVEEFDEESDAEPVEEIPET) shows a compositional bias: acidic residues. Ser-1287 is modified (phosphoserine).

It belongs to the claspin family. Post-translationally, phosphorylated in response to DNA damage by IR and HU treatment. Phosphorylation does not require mei-41 or tefu. In terms of tissue distribution, detected in the ovary but not in the testis (at protein level).

It is found in the nucleus. In terms of biological role, required for checkpoint signaling in response to DNA replication stress; either resulting from normal embryogenesis or induced by the DNA synthesis inhibitor hydroxyurea (HU). It is not required for the G2 arrest resulting from DNA double strand breaks induced by ionizing irradiation (IR). Necessary for the timely phosphorylation of Cdk1 at the mid-blastula transition. May have a minor role in maintaining genomic stability in mitotic cells. This chain is Claspin, found in Drosophila melanogaster (Fruit fly).